A 287-amino-acid polypeptide reads, in one-letter code: Uroplakin-3a (287 aa).

Residues 1-18 form the signal peptide; the sequence is MPPLWALLALGCLRFGSA. At 19-207 the chain is on the lumenal side; it reads VNLQPQLASV…DTWPGRRSGG (189 aa). Residues N74, N139, and N170 are each glycosylated (N-linked (GlcNAc...) asparagine). A helical transmembrane segment spans residues 208–235; sequence MIVITSILGSLPFFLLVGFAGAIALSLV. Topologically, residues 236 to 287 are cytoplasmic; it reads DMGSSDGETTHDSQITQEAVPKSLGASESSYTSVNRGPPLDRAEVYSSKLQD. Residues 242–287 form a disordered region; the sequence is GETTHDSQITQEAVPKSLGASESSYTSVNRGPPLDRAEVYSSKLQD. Positions 261–270 are enriched in polar residues; that stretch reads ASESSYTSVN.

Belongs to the uroplakin-3 family. As to quaternary structure, heterodimer with uroplakin-1B (UPK1B). In terms of tissue distribution, expressed in ureter.

It is found in the endoplasmic reticulum membrane. In terms of biological role, component of the asymmetric unit membrane (AUM); a highly specialized biomembrane elaborated by terminally differentiated urothelial cells. May play an important role in AUM-cytoskeleton interaction in terminally differentiated urothelial cells. It also contributes to the formation of urothelial glycocalyx which may play an important role in preventing bacterial adherence. The polypeptide is Uroplakin-3a (UPK3A) (Homo sapiens (Human)).